Here is a 493-residue protein sequence, read N- to C-terminus: Cobyric acid synthase (493 aa).

Positions E255–W441 constitute a GATase cobBQ-type domain. The Nucleophile role is filled by C336. The active site involves H433.

It belongs to the CobB/CobQ family. CobQ subfamily.

It functions in the pathway cofactor biosynthesis; adenosylcobalamin biosynthesis. Its function is as follows. Catalyzes amidations at positions B, D, E, and G on adenosylcobyrinic A,C-diamide. NH(2) groups are provided by glutamine, and one molecule of ATP is hydrogenolyzed for each amidation. The polypeptide is Cobyric acid synthase (Synechococcus sp. (strain RCC307)).